The chain runs to 320 residues: Cytochrome f (320 aa).

An N-terminal signal peptide occupies residues 1-35 (MENKNTFSWVKEQMTRSISVSIMIYVITQTSISNA). Heme contacts are provided by Tyr-36, Cys-56, Cys-59, and His-60. The helical transmembrane segment at 286 to 306 (VQGLLFFFASVILAQVFLVLK) threads the bilayer.

It belongs to the cytochrome f family. The 4 large subunits of the cytochrome b6-f complex are cytochrome b6, subunit IV (17 kDa polypeptide, petD), cytochrome f and the Rieske protein, while the 4 small subunits are PetG, PetL, PetM and PetN. The complex functions as a dimer. It depends on heme as a cofactor.

It localises to the plastid. It is found in the chloroplast thylakoid membrane. In terms of biological role, component of the cytochrome b6-f complex, which mediates electron transfer between photosystem II (PSII) and photosystem I (PSI), cyclic electron flow around PSI, and state transitions. This chain is Cytochrome f, found in Lolium perenne (Perennial ryegrass).